The sequence spans 245 residues: AA9 family lytic polysaccharide monooxygenase B (245 aa).

A signal peptide spans 1-18; that stretch reads MKSAIFAAAVLGAAGVSA. Positions 19 and 105 each coordinate Cu(2+). A disulfide bond links C116 and C120. Residues H179 and Q188 each coordinate O2. Y190 serves as a coordination point for Cu(2+).

This sequence belongs to the polysaccharide monooxygenase AA9 family. It depends on Cu(2+) as a cofactor.

It localises to the secreted. It catalyses the reaction [(1-&gt;4)-beta-D-glucosyl]n+m + reduced acceptor + O2 = 4-dehydro-beta-D-glucosyl-[(1-&gt;4)-beta-D-glucosyl]n-1 + [(1-&gt;4)-beta-D-glucosyl]m + acceptor + H2O.. Lytic polysaccharide monooxygenase (LPMO) that depolymerizes crystalline and amorphous polysaccharides via the oxidation of scissile alpha- or beta-(1-4)-glycosidic bonds, yielding C1 or C4 oxidation products. Catalysis by LPMOs requires the reduction of the active-site copper from Cu(II) to Cu(I) by a reducing agent and H(2)O(2) or O(2) as a cosubstrate. Active on hemicelluloses, including xylan, glucomannan, and xyloglucan. Has no activity on ivory nut mannan (INM), a linear beta-1,4-linked mannan without substitutions. The protein is AA9 family lytic polysaccharide monooxygenase B of Malbranchea cinnamomea (Thermophilic fungus).